The sequence spans 338 residues: Glyceraldehyde-3-phosphate dehydrogenase, cytosolic (338 aa).

Residues 14–15 (RI), Asp36, and Arg83 contribute to the NAD(+) site. Residues 154 to 156 (SCT), Thr185, 214 to 215 (TG), and Arg237 each bind D-glyceraldehyde 3-phosphate. The Nucleophile role is filled by Cys155. Asn319 contacts NAD(+).

It belongs to the glyceraldehyde-3-phosphate dehydrogenase family. Homotetramer.

It is found in the cytoplasm. It carries out the reaction D-glyceraldehyde 3-phosphate + phosphate + NAD(+) = (2R)-3-phospho-glyceroyl phosphate + NADH + H(+). Its pathway is carbohydrate degradation; glycolysis; pyruvate from D-glyceraldehyde 3-phosphate: step 1/5. Key enzyme in glycolysis that catalyzes the first step of the pathway by converting D-glyceraldehyde 3-phosphate (G3P) into 3-phospho-D-glyceroyl phosphate. Essential for the maintenance of cellular ATP levels and carbohydrate metabolism. The chain is Glyceraldehyde-3-phosphate dehydrogenase, cytosolic (GAPC1) from Pisum sativum (Garden pea).